Consider the following 887-residue polypeptide: Alanine--tRNA ligase (887 aa).

Residues His563, His567, Cys677, and His681 each coordinate Zn(2+).

Belongs to the class-II aminoacyl-tRNA synthetase family. It depends on Zn(2+) as a cofactor.

It is found in the cytoplasm. It carries out the reaction tRNA(Ala) + L-alanine + ATP = L-alanyl-tRNA(Ala) + AMP + diphosphate. In terms of biological role, catalyzes the attachment of alanine to tRNA(Ala) in a two-step reaction: alanine is first activated by ATP to form Ala-AMP and then transferred to the acceptor end of tRNA(Ala). Also edits incorrectly charged Ser-tRNA(Ala) and Gly-tRNA(Ala) via its editing domain. This chain is Alanine--tRNA ligase, found in Dinoroseobacter shibae (strain DSM 16493 / NCIMB 14021 / DFL 12).